Consider the following 364-residue polypeptide: Alpha-2-HS-glycoprotein (364 aa).

A signal peptide (or 17) is located at residues 1-15 (MKSFLLLFCLAQLCS). Residues 27–133 (YKEPACDDPD…QFSVLFTKCD (107 aa)) enclose the Cystatin fetuin-A-type 1 domain. 6 disulfide bridges follow: Cys32–Cys355, Cys89–Cys100, Cys114–Cys132, Cys146–Cys149, Cys208–Cys219, and Cys230–Cys248. An N-linked (GlcNAc...) asparagine glycan is attached at Asn99. 3 positions are modified to phosphoserine: Ser134, Ser135, and Ser138. Positions 144-256 (KLCPDCPLLA…TCTLFQTQPV (113 aa)) constitute a Cystatin fetuin-A-type 2 domain. N-linked (GlcNAc...) asparagine glycans are attached at residues Asn156 and Asn176. O-linked (GalNAc...) serine glycosylation is present at Ser301. Position 319 is a phosphothreonine (Thr319). 4 positions are modified to phosphoserine: Ser321, Ser325, Ser328, and Ser330. The O-linked (GalNAc...) threonine glycan is linked to Thr339.

The protein belongs to the fetuin family. Post-translationally, phosphorylated by FAM20C in the extracellular medium.

The protein resides in the secreted. The chain is Alpha-2-HS-glycoprotein (AHSG) from Ovis aries (Sheep).